The sequence spans 176 residues: ATP-dependent protease subunit HslV (176 aa).

The active site involves Thr2. Residues Gly157, Cys160, and Thr163 each coordinate Na(+).

It belongs to the peptidase T1B family. HslV subfamily. As to quaternary structure, a double ring-shaped homohexamer of HslV is capped on each side by a ring-shaped HslU homohexamer. The assembly of the HslU/HslV complex is dependent on binding of ATP.

The protein localises to the cytoplasm. The catalysed reaction is ATP-dependent cleavage of peptide bonds with broad specificity.. Allosterically activated by HslU binding. Protease subunit of a proteasome-like degradation complex believed to be a general protein degrading machinery. This Pseudomonas fluorescens (strain SBW25) protein is ATP-dependent protease subunit HslV.